A 158-amino-acid chain; its full sequence is NAD(P)H-quinone oxidoreductase subunit J, chloroplastic (158 aa).

It belongs to the complex I 30 kDa subunit family. NDH is composed of at least 16 different subunits, 5 of which are encoded in the nucleus.

Its subcellular location is the plastid. The protein resides in the chloroplast thylakoid membrane. The catalysed reaction is a plastoquinone + NADH + (n+1) H(+)(in) = a plastoquinol + NAD(+) + n H(+)(out). It catalyses the reaction a plastoquinone + NADPH + (n+1) H(+)(in) = a plastoquinol + NADP(+) + n H(+)(out). In terms of biological role, NDH shuttles electrons from NAD(P)H:plastoquinone, via FMN and iron-sulfur (Fe-S) centers, to quinones in the photosynthetic chain and possibly in a chloroplast respiratory chain. The immediate electron acceptor for the enzyme in this species is believed to be plastoquinone. Couples the redox reaction to proton translocation, and thus conserves the redox energy in a proton gradient. This is NAD(P)H-quinone oxidoreductase subunit J, chloroplastic from Nasturtium officinale (Watercress).